A 1224-amino-acid polypeptide reads, in one-letter code: Coatomer subunit alpha (1224 aa).

WD repeat units follow at residues threonine 3–tyrosine 38, threonine 42–tyrosine 80, arginine 84–tryptophan 122, and threonine 126–isoleucine 164. Serine 173 is subject to Phosphoserine. Phosphothreonine is present on threonine 185. WD repeat units follow at residues alanine 195–methionine 234, glutamate 241–methionine 278, and threonine 282–leucine 319. Serine 402 bears the Phosphoserine mark. Position 591 is a phosphothreonine (threonine 591). Phosphoserine is present on serine 895. Arginine 965 carries the post-translational modification Omega-N-methylarginine. Serine 1193 carries the phosphoserine modification.

Oligomeric complex that consists of at least the alpha, beta, beta', gamma, delta, epsilon and zeta subunits. Interacts with SCYL1. Interacts with JAGN1. Interacts with TMEM41B. Interacts with SVEP1. Probably interacts with PEX11A. In terms of tissue distribution, uniformly expressed in a wide range of adult and fetal tissues. Xenin is found in gastric, duodenal and jejunal mucosa. Circulates in the blood. Seems to be confined to specific endocrine cells.

The protein localises to the cytoplasm. The protein resides in the golgi apparatus membrane. It is found in the cytoplasmic vesicle. It localises to the COPI-coated vesicle membrane. Its subcellular location is the secreted. In terms of biological role, the coatomer is a cytosolic protein complex that binds to dilysine motifs and reversibly associates with Golgi non-clathrin-coated vesicles, which further mediate biosynthetic protein transport from the ER, via the Golgi up to the trans Golgi network. Coatomer complex is required for budding from Golgi membranes, and is essential for the retrograde Golgi-to-ER transport of dilysine-tagged proteins. In mammals, the coatomer can only be recruited by membranes associated to ADP-ribosylation factors (ARFs), which are small GTP-binding proteins; the complex also influences the Golgi structural integrity, as well as the processing, activity, and endocytic recycling of LDL receptors. Xenin stimulates exocrine pancreatic secretion. It inhibits pentagastrin-stimulated secretion of acid, to induce exocrine pancreatic secretion and to affect small and large intestinal motility. In the gut, xenin interacts with the neurotensin receptor. This Homo sapiens (Human) protein is Coatomer subunit alpha (COPA).